Reading from the N-terminus, the 290-residue chain is Arylamine N-acetyltransferase 2 (290 aa).

Cysteine 68 acts as the Acyl-thioester intermediate in catalysis. Positions 103 and 104 each coordinate CoA. Substrate is bound at residue 106 to 107; the sequence is IH. Active-site residues include histidine 107 and aspartate 122. Position 208 (tyrosine 208) interacts with CoA.

This sequence belongs to the arylamine N-acetyltransferase family.

The protein localises to the cytoplasm. It catalyses the reaction an arylamine + acetyl-CoA = an N-acetylarylamine + CoA. The catalysed reaction is an N-hydroxyarylamine + acetyl-CoA = an N-acetoxyarylamine + CoA. Functionally, catalyzes the N- or O-acetylation of various arylamine and heterocyclic amine substrates, and participates in the detoxification of a plethora of hydrazine and arylamine drugs. This Mus musculus (Mouse) protein is Arylamine N-acetyltransferase 2 (Nat2).